Reading from the N-terminus, the 188-residue chain is Methylamine dehydrogenase light chain (188 aa).

A signal peptide (tat-type signal) is located at residues 1-57 (MLGNFRFDDMVEKLSRRVAGRTSRRGAIGRLGTVLAGAALVPLLPVDRRGRVSRANA). Intrachain disulfides connect C80-C145, C86-C118, C93-C178, C95-C143, C103-C134, and C135-C166. Position 114 is a tryptophylquinone (W114). The tryptophan tryptophylquinone (Trp-Trp) cross-link spans 114-165 (WVASCYNPTDGQSYLIAYRDCCGYNVSGRCPCLNTEGELPVYRPEFANDIIW).

The protein belongs to the aromatic amine dehydrogenase light chain family. Heterotetramer of two light and two heavy chains. It depends on tryptophan tryptophylquinone residue as a cofactor. In terms of processing, predicted to be exported by the Tat system. The position of the signal peptide cleavage has been experimentally proven. Post-translationally, tryptophan tryptophylquinone (TTQ) is formed by oxidation of the indole ring of a tryptophan to form tryptophylquinone followed by covalent cross-linking with another tryptophan residue.

It is found in the periplasm. It carries out the reaction 2 oxidized [amicyanin] + methylamine + H2O = 2 reduced [amicyanin] + formaldehyde + NH4(+) + 2 H(+). The protein operates within one-carbon metabolism; methylamine degradation; formaldehyde from methylamine: step 1/1. Methylamine dehydrogenase carries out the oxidation of methylamine. Electrons are passed from methylamine dehydrogenase to amicyanin. This is Methylamine dehydrogenase light chain (mauA) from Paracoccus versutus (Thiobacillus versutus).